A 204-amino-acid chain; its full sequence is Somatotropin (204 aa).

An N-terminal signal peptide occupies residues 1 to 17 (MNSVVLLLSVVCLGVSS). Position 18 is a pyrrolidone carboxylic acid (Gln18). Position 36 (His36) interacts with Zn(2+). Cys69 and Cys177 are oxidised to a cystine. A Zn(2+)-binding site is contributed by Glu186. Cys194 and Cys202 form a disulfide bridge.

This sequence belongs to the somatotropin/prolactin family.

It localises to the secreted. Growth hormone plays an important role in growth control and involved in the regulation of several anabolic processes. This is Somatotropin (gh) from Oreochromis niloticus (Nile tilapia).